The following is a 715-amino-acid chain: MQRRTRGASSLRLARCLTPANLIRGDNAGVPERRIFGGCLLPTPEGLLSAAVGALRQRSDDAQPAFLTCTDRSVRLAARQHNTVPESLIVDGLASDPHYEYIRHYASAATQALGEVELTGGQLSRAILTQYWKYLQTVVPSGLDVPEDPVGDCDPSLHVLLRPTLAPKLLARTPFKSGAAAAKYAATVAGLRDALHRIQQYMFFMRPADPSRPSTDTALRLNELLAYVSVLYRWASWMLWTTDKHVCHRLSPSNRRFLPLGGSPEAPAETFARHLDRGPSGTTGSMQCMALRAAVSDVLGHLTRLANLWQTGKRSGGTYGTVDTVVSTVEVLSIVHHHAQYIINATLTGYGVWATDSLNNEYLRAAVDSQERFCRTTAPLFPTMTAPSWARMELSIKAWFGAALAADLLRSGAPSLHYESILRLVASRRTTWSAGPPPDDMARGPGGHRAGGGTVGKRFSGPARQRAPAPPPTSPTLDPRGHPAVPEAPRGRPAPPLPDADDPVAEPPGCAAQPATYYTHMGEVPPRLPARNVAGPDRRPPAATCPLLVRRASLGSLDRPRGWGPAPEGEPDQMEATYLTADDDDDARRKATHAASARERHAPYEDDESIYETVSEDGGRVYEEIPWMRVYENVCANTANAAPASPYIEAENPLYDWGGSALFSPPPRPPPPPPLSPSPVLARHRANALTNDGPTNVAALSALLTKLKREGRRSR.

3 disordered regions span residues 432 to 513, 585 to 605, and 659 to 680; these read WSAG…CAAQ, DDAR…APYE, and GSAL…PSPV. A compositionally biased stretch (gly residues) spans 444–455; sequence GPGGHRAGGGTV. Composition is skewed to low complexity over residues 456–467 and 475–488; these read GKRFSGPARQRA and PTLD…VPEA. Pro residues predominate over residues 664 to 677; it reads SPPPRPPPPPPLSP.

Belongs to the herpesviridae HHV-1 VP11/12 protein family. Interacts with VP16. Interacts with host LCK, PIK3R1, SHC1 AND GRB2; these interactions promote the activation of the PI3K/AKT pathway. Interacts with host YWHAB. Interacts with ICP0; this interaction targets UL46 for degradation by the proteasome. In terms of processing, phosphorylated by host LCK. The phosphorylation seems to be lymphocyte-specific.

The protein resides in the virion tegument. It localises to the host cell membrane. Its function is as follows. Plays a role in the activation of the host PI3K/AKT pathway to promote cell survival. Interacts with and activates host LCK and thereby recruits downstream partners SHC1, GRB2 and PI3KR1 in order to activate the PI3K pathway by phosphorylating host AKT on its activating residues. This mechanism is inhibited by the viral protein US3 that instead promotes incorporation of UL46 into virions. The protein is Tegument protein UL46 of Human herpesvirus 1 (strain F) (HHV-1).